Consider the following 287-residue polypeptide: MAYISGKTMLENAYKEGYGVGAFSAHNAETIQGILEAAEQMKSPIMIQVGQKVIQNVGLEPMKALIDIYMKDVTVPVAVHLDHCRDLGQAMKAIQLGFQSVMFDGSALSFEENAEKTKLVADAASHLGIGSEGEIGKIGGTEDDITVDEKDAQITSEEEALAFADRSRVDYLALSIGTAHGIYKQEPELAFDRIEEISKSLNKPLVMHGGSDVPDADVKKAIGLGIAKINVDTELRVAFTEGMKQCLQDNPNEYHLAHSLGAGKEAMIDKVKEKIRVFGSENKARTY.

Residue Asp-82 is the Proton donor of the active site. Residues His-83 and His-180 each contribute to the Zn(2+) site. Gly-181 serves as a coordination point for dihydroxyacetone phosphate. His-208 lines the Zn(2+) pocket. Dihydroxyacetone phosphate contacts are provided by residues 209-211 (GGS) and 230-233 (NVDT).

This sequence belongs to the class II fructose-bisphosphate aldolase family. Zn(2+) is required as a cofactor.

The catalysed reaction is 6-deoxy-6-sulfo-D-fructose 1-phosphate = (2S)-3-sulfolactaldehyde + dihydroxyacetone phosphate. In terms of biological role, part of the sulfo-EMP2 pathway, a D-sulfoquinovose degradation pathway that produces sulfolactate (SL). Cleaves 6-deoxy-6-sulfo-D-fructose 1-phosphate (SFP) to form dihydroxyacetone phosphate (DHAP) and 3-sulfolactaldehyde (SLA). This is Sulfofructosephosphate aldolase from Alkalicoccus urumqiensis (Bacillus urumqiensis).